The primary structure comprises 220 residues: Ribosomal RNA small subunit methyltransferase G 1 (220 aa).

3 residues coordinate S-adenosyl-L-methionine: G79, F84, and R150.

It belongs to the methyltransferase superfamily. RNA methyltransferase RsmG family.

Its subcellular location is the cytoplasm. It catalyses the reaction guanosine(527) in 16S rRNA + S-adenosyl-L-methionine = N(7)-methylguanosine(527) in 16S rRNA + S-adenosyl-L-homocysteine. In terms of biological role, specifically methylates the N7 position of guanine in position 527 of 16S rRNA. The sequence is that of Ribosomal RNA small subunit methyltransferase G 1 from Syntrophobacter fumaroxidans (strain DSM 10017 / MPOB).